We begin with the raw amino-acid sequence, 21 residues long: Protopolybiakinin-1 (21 aa).

The span at 1-11 shows a compositional bias: basic residues; that stretch reads DKNKKPIRVGG. The interval 1-21 is disordered; that stretch reads DKNKKPIRVGGRRPPGFTPFR.

It belongs to the bradykinin-related peptide family. In terms of tissue distribution, expressed by the venom gland.

Its subcellular location is the secreted. Its function is as follows. Causes constriction of the isolated rat ileum muscles (is 13-fold less potent than bradykinin (BK)), as well as degranulation of mast cells (is 7-fold more potent than BK). In vivo, causes algesic effects. Muscle constriction and algesic effects are partially mediated by bradykinin receptors B2 (BDKRB2). In Protopolybia exigua (Neotropical social wasp), this protein is Protopolybiakinin-1.